The chain runs to 227 residues: [D-Ala2]-deltorphins (227 aa).

The N-terminal stretch at 1–20 (MSFLKKSLLLVLFLGLVSHS) is a signal peptide. A propeptide spanning residues 21–46 (VCKEEKRETEEENENEEENHEVGSEM) is cleaved from the precursor. The tract at residues 22 to 227 (CKEEKRETEE…DVVGGEAKKM (206 aa)) is disordered. Residues 30 to 39 (EEENENEEEN) are compositionally biased toward acidic residues. At Ala-50 the chain carries D-alanine (Ala). A propeptide spanning residues 57-75 (DTEEKNENEEENQEEGSEM) is cleaved from the precursor. Acidic residues predominate over residues 62–72 (NENEEENQEEG). Positions 73 to 87 (SEMKRYAFGYPKREP) are enriched in basic and acidic residues. Ala-79 bears the D-alanine (Ala) mark. Positions 86–104 (EPEEENENEEENHEEGSEM) are excised as a propeptide. Over residues 88-98 (EEENENEEENH) the composition is skewed to acidic residues. Over residues 99-108 (EEGSEMKRYA) the composition is skewed to basic and acidic residues. Position 108 is a D-alanine (Ala) (Ala-108). Gly-113 carries the glycine amide modification. Residues 115–140 (EAKKMKREPEEENENEEENHEEGSEM) constitute a propeptide that is removed on maturation. Residues 124–134 (EEENENEEENH) show a composition bias toward acidic residues. A compositionally biased stretch (basic and acidic residues) spans 135–144 (EEGSEMKRYA). Ala-144 bears the D-alanine (Ala) mark. Position 149 is a glycine amide (Gly-149). The propeptide occupies 151 to 176 (EAKKMKREPEEENENEEENHEEGSEM). Positions 160 to 170 (EEENENEEENH) are enriched in acidic residues. Positions 171–180 (EEGSEMKRYA) are enriched in basic and acidic residues. Ala-180 bears the D-alanine (Ala) mark. Position 185 is a glycine amide (Gly-185). Residues 187–212 (EAKKMKREPEEENENEEENHEEGSEM) constitute a propeptide that is removed on maturation. Over residues 196-206 (EEENENEEENH) the composition is skewed to acidic residues. Over residues 207 to 216 (EEGSEMKRYA) the composition is skewed to basic and acidic residues. Residue Ala-216 is modified to D-alanine (Ala). Position 221 is a glycine amide (Gly-221). The propeptide occupies 223-227 (EAKKM).

The protein belongs to the frog skin active peptide (FSAP) family. Dermorphin subfamily. In terms of tissue distribution, expressed by the skin glands.

It is found in the secreted. In terms of biological role, deltorphin is a heptapeptide with a very potent opiate-like activity. Has high affinity and selectivity for delta-type opioid receptors. The two dermorphin-like peptides have a similar affinity and selectivity for the mu opioid receptor as dermorphin. The sequence is that of [D-Ala2]-deltorphins from Phyllomedusa bicolor (Two-colored leaf frog).